Reading from the N-terminus, the 79-residue chain is Defensin-like protein 3 (79 aa).

Positions 1–29 are cleaved as a signal peptide; the sequence is MAKFASIITLLFAALVVFAAFEAPTMVEA. Disulfide bonds link Cys32-Cys79, Cys43-Cys64, Cys49-Cys73, and Cys53-Cys75.

The protein belongs to the DEFL family.

It localises to the secreted. Its function is as follows. Possesses antifungal activity sensitive to inorganic cations. The chain is Defensin-like protein 3 (AFP3) from Brassica napus (Rape).